Here is a 464-residue protein sequence, read N- to C-terminus: tRNA modification GTPase MnmE (464 aa).

Residues Arg27, Glu90, and Lys129 each contribute to the (6S)-5-formyl-5,6,7,8-tetrahydrofolate site. The TrmE-type G domain maps to 222-384 (GIALVLAGSV…LYDKIRSLTC (163 aa)). GTP contacts are provided by residues 232–237 (NVGKSS), 251–257 (SSYAGTT), and 276–279 (DTAG). The Mg(2+) site is built by Ser236 and Thr257. (6S)-5-formyl-5,6,7,8-tetrahydrofolate is bound at residue Lys464.

It belongs to the TRAFAC class TrmE-Era-EngA-EngB-Septin-like GTPase superfamily. TrmE GTPase family. Homodimer. Heterotetramer of two MnmE and two MnmG subunits. It depends on K(+) as a cofactor.

Its subcellular location is the cytoplasm. Its function is as follows. Exhibits a very high intrinsic GTPase hydrolysis rate. Involved in the addition of a carboxymethylaminomethyl (cmnm) group at the wobble position (U34) of certain tRNAs, forming tRNA-cmnm(5)s(2)U34. The sequence is that of tRNA modification GTPase MnmE from Borrelia turicatae (strain 91E135).